The primary structure comprises 291 residues: 33 kDa chaperonin (291 aa).

2 cysteine pairs are disulfide-bonded: cysteine 237-cysteine 239 and cysteine 270-cysteine 273.

Belongs to the HSP33 family. Under oxidizing conditions two disulfide bonds are formed involving the reactive cysteines. Under reducing conditions zinc is bound to the reactive cysteines and the protein is inactive.

It localises to the cytoplasm. Functionally, redox regulated molecular chaperone. Protects both thermally unfolding and oxidatively damaged proteins from irreversible aggregation. Plays an important role in the bacterial defense system toward oxidative stress. The protein is 33 kDa chaperonin of Bacillus cereus (strain G9842).